Here is a 177-residue protein sequence, read N- to C-terminus: Large ribosomal subunit protein uL6 (177 aa).

Belongs to the universal ribosomal protein uL6 family. Part of the 50S ribosomal subunit.

Its function is as follows. This protein binds to the 23S rRNA, and is important in its secondary structure. It is located near the subunit interface in the base of the L7/L12 stalk, and near the tRNA binding site of the peptidyltransferase center. This chain is Large ribosomal subunit protein uL6, found in Nitrosospira multiformis (strain ATCC 25196 / NCIMB 11849 / C 71).